A 562-amino-acid chain; its full sequence is Long-chain-fatty-acid--CoA ligase (562 aa).

Tyr-213–Ala-224 provides a ligand contact to ATP.

This sequence belongs to the ATP-dependent AMP-binding enzyme family. It depends on Mg(2+) as a cofactor.

Its subcellular location is the membrane. It carries out the reaction a long-chain fatty acid + ATP + CoA = a long-chain fatty acyl-CoA + AMP + diphosphate. Its pathway is lipid metabolism; fatty acid beta-oxidation. In terms of biological role, catalyzes the esterification, concomitant with transport, of exogenous long-chain fatty acids into metabolically active CoA thioesters for subsequent degradation or incorporation into phospholipids. The polypeptide is Long-chain-fatty-acid--CoA ligase (fadD) (Yersinia pestis).